Consider the following 255-residue polypeptide: 3-dehydroquinate dehydratase (255 aa).

3-dehydroquinate contacts are provided by residues Glu-47–Arg-49 and Arg-83. Catalysis depends on His-144, which acts as the Proton donor/acceptor. Residue Lys-171 is the Schiff-base intermediate with substrate of the active site. The 3-dehydroquinate site is built by Arg-214, Ser-233, and Gln-237.

Belongs to the type-I 3-dehydroquinase family. In terms of assembly, homodimer.

It carries out the reaction 3-dehydroquinate = 3-dehydroshikimate + H2O. It functions in the pathway metabolic intermediate biosynthesis; chorismate biosynthesis; chorismate from D-erythrose 4-phosphate and phosphoenolpyruvate: step 3/7. Involved in the third step of the chorismate pathway, which leads to the biosynthesis of aromatic amino acids. Catalyzes the cis-dehydration of 3-dehydroquinate (DHQ) and introduces the first double bond of the aromatic ring to yield 3-dehydroshikimate. This chain is 3-dehydroquinate dehydratase, found in Alkaliphilus oremlandii (strain OhILAs) (Clostridium oremlandii (strain OhILAs)).